Here is a 308-residue protein sequence, read N- to C-terminus: tRNA dimethylallyltransferase 1 (308 aa).

9–16 (GPTGVGKT) provides a ligand contact to ATP. 11–16 (TGVGKT) lines the substrate pocket. The interval 34–37 (DSRQ) is interaction with substrate tRNA.

Belongs to the IPP transferase family. In terms of assembly, monomer. Requires Mg(2+) as cofactor.

It carries out the reaction adenosine(37) in tRNA + dimethylallyl diphosphate = N(6)-dimethylallyladenosine(37) in tRNA + diphosphate. In terms of biological role, catalyzes the transfer of a dimethylallyl group onto the adenine at position 37 in tRNAs that read codons beginning with uridine, leading to the formation of N6-(dimethylallyl)adenosine (i(6)A). The sequence is that of tRNA dimethylallyltransferase 1 from Bacteroides thetaiotaomicron (strain ATCC 29148 / DSM 2079 / JCM 5827 / CCUG 10774 / NCTC 10582 / VPI-5482 / E50).